We begin with the raw amino-acid sequence, 400 residues long: Methylamine dehydrogenase heavy chain (400 aa).

An N-terminal signal peptide occupies residues 1–27; it reads MTTFQPGRLAGQLAATALLAATCSAFA.

Belongs to the aromatic amine dehydrogenase heavy chain family. Tetramer of two light and two heavy chains.

It localises to the periplasm. The catalysed reaction is 2 oxidized [amicyanin] + methylamine + H2O = 2 reduced [amicyanin] + formaldehyde + NH4(+) + 2 H(+). Functionally, methylamine dehydrogenase carries out the oxidation of methylamine. Electrons are passed from methylamine dehydrogenase to amicyanin. The polypeptide is Methylamine dehydrogenase heavy chain (mauB) (Methylobacillus flagellatus (strain ATCC 51484 / DSM 6875 / VKM B-1610 / KT)).